Reading from the N-terminus, the 302-residue chain is ATP synthase subunit b 1 (302 aa).

Residues 5–22 traverse the membrane as a helical segment; that stretch reads WFTVIAQGINFLLLLWLL. The interval 278-302 is disordered; sequence GLPENEGTDNPEANPPHAEAKIPHA.

The protein belongs to the ATPase B chain family. F-type ATPases have 2 components, F(1) - the catalytic core - and F(0) - the membrane proton channel. F(1) has five subunits: alpha(3), beta(3), gamma(1), delta(1), epsilon(1). F(0) has three main subunits: a(1), b(2) and c(10-14). The alpha and beta chains form an alternating ring which encloses part of the gamma chain. F(1) is attached to F(0) by a central stalk formed by the gamma and epsilon chains, while a peripheral stalk is formed by the delta and b chains.

The protein resides in the cell inner membrane. Functionally, f(1)F(0) ATP synthase produces ATP from ADP in the presence of a proton or sodium gradient. F-type ATPases consist of two structural domains, F(1) containing the extramembraneous catalytic core and F(0) containing the membrane proton channel, linked together by a central stalk and a peripheral stalk. During catalysis, ATP synthesis in the catalytic domain of F(1) is coupled via a rotary mechanism of the central stalk subunits to proton translocation. Component of the F(0) channel, it forms part of the peripheral stalk, linking F(1) to F(0). This Pseudoalteromonas atlantica (strain T6c / ATCC BAA-1087) protein is ATP synthase subunit b 1.